Reading from the N-terminus, the 490-residue chain is Phosphoethanolamine N-methyltransferase 3 (490 aa).

Gly-60, Arg-65, Asp-81, Asp-106, Val-107, and Asn-125 together coordinate S-adenosyl-L-homocysteine. Residues Ser-158, Ser-163, Gly-164, Arg-168, and Tyr-175 each coordinate phosphocholine. Residues 244-245 and Tyr-253 contribute to the N-methylethanolamine phosphate site; that span reads QY. Tyr-253 is a binding site for phosphocholine. The S-adenosyl-L-homocysteine site is built by Val-262, Ser-263, Gly-289, Asp-311, Asp-337, Cys-338, and Arg-354. Residues Tyr-385, Tyr-399, Arg-403, Tyr-405, and Lys-471 each contribute to the phosphocholine site. N-methylethanolamine phosphate is bound by residues Tyr-385, Tyr-399, 403–405, and Lys-471; that span reads RGY.

The protein belongs to the class I-like SAM-binding methyltransferase superfamily. PEAMT family. As to expression, expressed in root vasculature, shoots, rosettes leaves, cauline leaves, sepals, petals, anther filaments and ovules. Highly expressed in leaf vasculature.

The protein localises to the cytoplasm. The catalysed reaction is phosphoethanolamine + S-adenosyl-L-methionine = N-methylethanolamine phosphate + S-adenosyl-L-homocysteine + H(+). It carries out the reaction N-methylethanolamine phosphate + S-adenosyl-L-methionine = N,N-dimethylethanolamine phosphate + S-adenosyl-L-homocysteine + H(+). It catalyses the reaction N,N-dimethylethanolamine phosphate + S-adenosyl-L-methionine = phosphocholine + S-adenosyl-L-homocysteine + H(+). The protein operates within phospholipid metabolism; phosphatidylcholine biosynthesis; phosphocholine from phosphoethanolamine: step 1/1. In terms of biological role, involved in phosphocholine biosynthesis. Catalyzes the N-methylation of phosphoethanolamine, phosphomonomethylethanolamine and phosphodimethylethanolamine, the three methylation steps required to convert phosphoethanolamine to phosphocholine (PC). In association with NMT1, regulates PC homeostasis, phase transition at the shoot apex, coordinated organ development, and fertility. In associtation with NMT1, involved in phosphatidylcholine biosynthesis and vascular development. This is Phosphoethanolamine N-methyltransferase 3 from Arabidopsis thaliana (Mouse-ear cress).